The sequence spans 230 residues: UPF0173 metal-dependent hydrolase Pden_0574 (230 aa).

It belongs to the UPF0173 family.

This is UPF0173 metal-dependent hydrolase Pden_0574 from Paracoccus denitrificans (strain Pd 1222).